We begin with the raw amino-acid sequence, 149 residues long: Transcriptional repressor NrdR (149 aa).

The segment at 3–34 (CPFCGANDTKVIDSRLVADGHQVRRRRQCLAC) is a zinc-finger region. Residues 49 to 139 (PRVIKTDGNR…VYRSFEDIRE (91 aa)) enclose the ATP-cone domain.

It belongs to the NrdR family. It depends on Zn(2+) as a cofactor.

Functionally, negatively regulates transcription of bacterial ribonucleotide reductase nrd genes and operons by binding to NrdR-boxes. This chain is Transcriptional repressor NrdR, found in Photobacterium profundum (strain SS9).